We begin with the raw amino-acid sequence, 690 residues long: Exonuclease GOR (690 aa).

2 disordered regions span residues 136–162 (TRVASSSQRSSGSKVGRQPGKTRNRSG) and 567–690 (QPRH…SLHH). The span at 585–595 (APSTTAISPES) shows a compositional bias: polar residues. Positions 605–614 (KETGAVDGRR) are enriched in basic and acidic residues. The segment at 612–626 (GRRGQKAKSNPNRPL) is GOR14-1 epitope. Over residues 631–646 (NPCRGPSGLSPSLCPS) the composition is skewed to low complexity. Residues 661–682 (PPLPVPRVPAAPPRACPHPSAH) show a composition bias toward pro residues.

Belongs to the REXO1/REXO3 family.

The protein resides in the cytoplasm. Its subcellular location is the nucleus. This chain is Exonuclease GOR (REXO1L1), found in Pan troglodytes (Chimpanzee).